A 1411-amino-acid polypeptide reads, in one-letter code: Uveal autoantigen with coiled-coil domains and ankyrin repeats (1411 aa).

An N-acetylmethionine modification is found at methionine 1. The disordered stretch occupies residues 1 to 30; the sequence is MKSLKSRLWKQDAPGPTSPSSPTAVASTQS. Residues 13 to 30 are compositionally biased toward low complexity; sequence APGPTSPSSPTAVASTQS. 6 ANK repeats span residues 69 to 98, 102 to 131, 135 to 164, 168 to 197, 201 to 230, and 234 to 263; these read EGRSAFHVVASKGNLECLNAILTHGIDVAT, AGRNALHLAAKYGHALCLQKLLQYNCPTEH, QGRTALHDAVMADCPSSIQLLCDHGASVNA, DGRTPLVLATQMCRPTICQLLIDRGADVNS, QNRTALMLGCEYGCRDAVEVLVKNGADLTL, and LGHDSSYYARIGDNLDILNLLKTASENTNK. The tract at residues 263-301 is disordered; the sequence is KGRELWRKGPPLQQRNLSHTQDEGSVKSTQREQREPHSF. Serine 280 carries the phosphoserine modification. Residues 282–301 show a composition bias toward basic and acidic residues; sequence TQDEGSVKSTQREQREPHSF. Coiled-coil stretches lie at residues 299-379, 442-624, and 652-1380; these read HSFQ…NRFK, SENE…LKEL, and VKRL…AIYR. The disordered stretch occupies residues 1006-1031; that stretch reads GLKEQLSEQTHKCRQRDEEVKKGKQE.

As to quaternary structure, component of the apoptosome complex, composed of APAF1, pro-caspase-9 and UACA. In the complex, it probably interacts directly with APAF1. Interacts with LGALS3, ARF6 and ACTB. Interacts with RAB39A. In terms of tissue distribution, highly expressed in heart, liver, kidney and testis. Weakly expressed in lung and skeletal muscle. Not expressed in brain and spleen.

The protein localises to the nucleus. It localises to the cytoplasm. The protein resides in the cytoskeleton. Regulates APAF1 expression and plays an important role in the regulation of stress-induced apoptosis. Promotes apoptosis by regulating three pathways, apoptosome up-regulation, LGALS3/galectin-3 down-regulation and NF-kappa-B inactivation. Regulates the redistribution of APAF1 into the nucleus after proapoptotic stress. Down-regulates the expression of LGALS3 by inhibiting NFKB1. Its function is as follows. Modulates isoactin dynamics to regulate the morphological alterations required for cell growth and motility. Interaction with ARF6 may modulate cell shape and motility after injury. May be involved in multiple neurite formation. This Mus musculus (Mouse) protein is Uveal autoantigen with coiled-coil domains and ankyrin repeats (Uaca).